The primary structure comprises 197 residues: Ribonuclease HII (197 aa).

The RNase H type-2 domain maps to 11 to 197; the sequence is HLIAGVDEVG…FAPVKKILGL (187 aa). The a divalent metal cation site is built by Asp-17, Glu-18, and Asp-109.

It belongs to the RNase HII family. It depends on Mn(2+) as a cofactor. The cofactor is Mg(2+).

It localises to the cytoplasm. The catalysed reaction is Endonucleolytic cleavage to 5'-phosphomonoester.. Its function is as follows. Endonuclease that specifically degrades the RNA of RNA-DNA hybrids. The protein is Ribonuclease HII of Actinobacillus pleuropneumoniae serotype 7 (strain AP76).